Consider the following 195-residue polypeptide: Heat shock protein beta-8 (195 aa).

Serine 56 is subject to Phosphoserine. Threonine 62 bears the Phosphothreonine mark. Asymmetric dimethylarginine is present on residues arginine 70 and arginine 77. Residues 73–184 form the sHSP domain; it reads TATARFGVPA…TFGESSFNNE (112 aa). The tract at residues 175 to 195 is disordered; the sequence is TFGESSFNNELPQDSQEVTCT. The segment covering 176-195 has biased composition (polar residues); the sequence is FGESSFNNELPQDSQEVTCT.

The protein belongs to the small heat shock protein (HSP20) family. Monomer. Forms a ternary complex with BAG3 and HSPA1A. Component of the chaperone-assisted selective autophagy (CASA) complex consisting of BAG3, HSPA8/HSC70, HSPB8 and STUB1/CHIP. Interacts with HSPB1. Interacts with DNAJB6. Interacts with BAG3. Post-translationally, phosphorylated.

The protein localises to the cytoplasm. Its subcellular location is the nucleus. Functionally, involved in the chaperone-assisted selective autophagy (CASA), a crucial process for protein quality control, particularly in mechanical strained cells and tissues such as muscle. Displays temperature-dependent chaperone activity. This Macaca mulatta (Rhesus macaque) protein is Heat shock protein beta-8 (HSPB8).